The primary structure comprises 167 residues: Signal peptidase complex subunit 3A (167 aa).

The Cytoplasmic portion of the chain corresponds to Met1–Leu11. The chain crosses the membrane as a helical; Signal-anchor for type II membrane protein span at residues Leu12–Phe32. Residues Ser33 to Arg167 lie on the Lumenal side of the membrane. N-linked (GlcNAc...) asparagine glycosylation occurs at Asn136.

It belongs to the SPCS3 family. As to quaternary structure, component of the signal peptidase complex (SPC) composed of a catalytic subunit SEC11 and three accessory subunits SPCS1, SPCS2 and SPCS3. The complex induces a local thinning of the ER membrane which is used to measure the length of the signal peptide (SP) h-region of protein substrates. This ensures the selectivity of the complex towards h-regions shorter than 18-20 amino acids.

It localises to the endoplasmic reticulum membrane. Essential component of the signal peptidase complex (SPC) which catalyzes the cleavage of N-terminal signal sequences from nascent proteins as they are translocated into the lumen of the endoplasmic reticulum. Essential for the SPC catalytic activity, possibly by stabilizing and positioning the active center of the complex close to the lumenal surface. The polypeptide is Signal peptidase complex subunit 3A (Arabidopsis thaliana (Mouse-ear cress)).